The primary structure comprises 181 residues: Ribonuclease M5 (181 aa).

The 84-residue stretch at 5–88 folds into the Toprim domain; sequence KEIIVVEGKD…IKHAYLNTKD (84 aa). Mg(2+)-binding residues include E11, D57, and D59.

Belongs to the ribonuclease M5 family. Requires Mg(2+) as cofactor.

It localises to the cytoplasm. It catalyses the reaction Endonucleolytic cleavage of RNA, removing 21 and 42 nucleotides, respectively, from the 5'- and 3'-termini of a 5S-rRNA precursor.. Its function is as follows. Required for correct processing of both the 5' and 3' ends of 5S rRNA precursor. Cleaves both sides of a double-stranded region yielding mature 5S rRNA in one step. The protein is Ribonuclease M5 of Borreliella burgdorferi (strain ATCC 35210 / DSM 4680 / CIP 102532 / B31) (Borrelia burgdorferi).